We begin with the raw amino-acid sequence, 506 residues long: NADH-quinone oxidoreductase subunit N 2 (506 aa).

14 helical membrane-spanning segments follow: residues 11 to 31, 44 to 64, 82 to 102, 117 to 137, 140 to 160, 175 to 195, 222 to 242, 254 to 274, 289 to 309, 323 to 345, 356 to 376, 394 to 414, 419 to 439, and 472 to 492; these read SLAY…LVVW, LVIL…YFLA, FSNL…LFLV, SGEL…MAAS, LLLI…LAGF, VIFG…IFGI, VFVG…AAPF, PTPV…AVLI, GVAT…MTVG, LAYS…SGAG, YCFM…ESGG, AAAM…AGFI, LFSA…VVGV, and LLGG…VYWG.

Belongs to the complex I subunit 2 family. NDH-1 is composed of 14 different subunits. Subunits NuoA, H, J, K, L, M, N constitute the membrane sector of the complex.

It localises to the cell inner membrane. The enzyme catalyses a quinone + NADH + 5 H(+)(in) = a quinol + NAD(+) + 4 H(+)(out). Its function is as follows. NDH-1 shuttles electrons from NADH, via FMN and iron-sulfur (Fe-S) centers, to quinones in the respiratory chain. The immediate electron acceptor for the enzyme in this species is believed to be ubiquinone. Couples the redox reaction to proton translocation (for every two electrons transferred, four hydrogen ions are translocated across the cytoplasmic membrane), and thus conserves the redox energy in a proton gradient. The chain is NADH-quinone oxidoreductase subunit N 2 from Sorangium cellulosum (strain So ce56) (Polyangium cellulosum (strain So ce56)).